The following is a 211-amino-acid chain: Urease accessory protein UreE (211 aa).

The tract at residues 170 to 211 (EHHGHSHDRGCDHSHSHSHDHDHDHGHVHGPGCGHAPHHRHD) is disordered. Over residues 176–196 (HDRGCDHSHSHSHDHDHDHGH) the composition is skewed to basic and acidic residues.

This sequence belongs to the UreE family.

It localises to the cytoplasm. Involved in urease metallocenter assembly. Binds nickel. Probably functions as a nickel donor during metallocenter assembly. The chain is Urease accessory protein UreE from Ralstonia nicotianae (strain ATCC BAA-1114 / GMI1000) (Ralstonia solanacearum).